The sequence spans 157 residues: 2-C-methyl-D-erythritol 2,4-cyclodiphosphate synthase (157 aa).

Residues aspartate 8 and histidine 10 each coordinate a divalent metal cation. Residues 8-10 (DIH) and 34-35 (HS) contribute to the 4-CDP-2-C-methyl-D-erythritol 2-phosphate site. Histidine 42 serves as a coordination point for a divalent metal cation. 4-CDP-2-C-methyl-D-erythritol 2-phosphate-binding positions include 56–58 (DIG), 61–65 (FPDTD), 132–135 (TTNE), and arginine 142.

It belongs to the IspF family. In terms of assembly, homotrimer. Requires a divalent metal cation as cofactor.

The catalysed reaction is 4-CDP-2-C-methyl-D-erythritol 2-phosphate = 2-C-methyl-D-erythritol 2,4-cyclic diphosphate + CMP. The protein operates within isoprenoid biosynthesis; isopentenyl diphosphate biosynthesis via DXP pathway; isopentenyl diphosphate from 1-deoxy-D-xylulose 5-phosphate: step 4/6. Involved in the biosynthesis of isopentenyl diphosphate (IPP) and dimethylallyl diphosphate (DMAPP), two major building blocks of isoprenoid compounds. Catalyzes the conversion of 4-diphosphocytidyl-2-C-methyl-D-erythritol 2-phosphate (CDP-ME2P) to 2-C-methyl-D-erythritol 2,4-cyclodiphosphate (ME-CPP) with a corresponding release of cytidine 5-monophosphate (CMP). This chain is 2-C-methyl-D-erythritol 2,4-cyclodiphosphate synthase, found in Chloroherpeton thalassium (strain ATCC 35110 / GB-78).